Consider the following 353-residue polypeptide: MYYLSDLSHYAFFTYISVRAGFAFFIALCLSLFLMPKFITWAKAKNASQPIYEYAPETHKTKCHTPTMGGLIFISSAVIASLFCIKFDNIFAISALLCLILFCLIGLIDDLGKVLKKDNHSGLSPRMKLLAQIIAGLICILPLYFSSELSTELFIPFYKHPLFDMEIFAIAFWILVLISSSNAVNLTDGLDGLATVPGIFSLSTLGIFLYLSGNLNYSEYLLLPKIQGLGEVVIICAALIGALMGFLWYNCYPAQVFMGDSGSLALGGFIGFLAVISKNEILLLLIGFVFVLETVSVILQVGSFKIFNKRVFKMAPIHHHFEKVGWVENKIIVRFWMIALLSNLLALASIKLR.

The next 10 membrane-spanning stretches (helical) occupy residues Phe22 to Ala42, Thr65 to Ile85, Asp88 to Ile108, Leu129 to Leu149, Pro161 to Ser181, Gly192 to Ser212, Gly228 to Trp248, Val256 to Ile276, Ile281 to Val301, and Lys330 to Ile350.

The protein belongs to the glycosyltransferase 4 family. MraY subfamily. Mg(2+) is required as a cofactor.

Its subcellular location is the cell inner membrane. The catalysed reaction is UDP-N-acetyl-alpha-D-muramoyl-L-alanyl-gamma-D-glutamyl-meso-2,6-diaminopimeloyl-D-alanyl-D-alanine + di-trans,octa-cis-undecaprenyl phosphate = di-trans,octa-cis-undecaprenyl diphospho-N-acetyl-alpha-D-muramoyl-L-alanyl-D-glutamyl-meso-2,6-diaminopimeloyl-D-alanyl-D-alanine + UMP. It functions in the pathway cell wall biogenesis; peptidoglycan biosynthesis. Functionally, catalyzes the initial step of the lipid cycle reactions in the biosynthesis of the cell wall peptidoglycan: transfers peptidoglycan precursor phospho-MurNAc-pentapeptide from UDP-MurNAc-pentapeptide onto the lipid carrier undecaprenyl phosphate, yielding undecaprenyl-pyrophosphoryl-MurNAc-pentapeptide, known as lipid I. The polypeptide is Phospho-N-acetylmuramoyl-pentapeptide-transferase (Campylobacter jejuni subsp. jejuni serotype O:2 (strain ATCC 700819 / NCTC 11168)).